We begin with the raw amino-acid sequence, 319 residues long: Ribonuclease Z (319 aa).

His62, His64, Asp66, His67, His145, Asp215, and His273 together coordinate Zn(2+). The Proton acceptor role is filled by Asp66.

This sequence belongs to the RNase Z family. As to quaternary structure, homodimer. Zn(2+) is required as a cofactor.

It carries out the reaction Endonucleolytic cleavage of RNA, removing extra 3' nucleotides from tRNA precursor, generating 3' termini of tRNAs. A 3'-hydroxy group is left at the tRNA terminus and a 5'-phosphoryl group is left at the trailer molecule.. Its function is as follows. Zinc phosphodiesterase, which displays some tRNA 3'-processing endonuclease activity. Probably involved in tRNA maturation, by removing a 3'-trailer from precursor tRNA. The polypeptide is Ribonuclease Z (Borrelia recurrentis (strain A1)).